The sequence spans 149 residues: Conglutin delta 3 (149 aa).

The N-terminal stretch at 1–22 (MAKLTILIALVAALVLVVHTSA) is a signal peptide. 4 cysteine pairs are disulfide-bonded: Cys-30/Cys-98, Cys-42/Cys-86, Cys-87/Cys-134, and Cys-100/Cys-142.

The protein belongs to the 2S seed storage albumins family. As to quaternary structure, heterodimer of a small chain and a large chain; disulfide-linked.

It localises to the endoplasmic reticulum. This Lupinus angustifolius (Narrow-leaved blue lupine) protein is Conglutin delta 3.